The primary structure comprises 102 residues: Putative lipid-transfer protein DIR1 (102 aa).

A signal peptide spans 1–25 (MASKKAAMVMMAMIVIMAMLVDTSV). 4 disulfides stabilise this stretch: C30–C67, C40–C56, C57–C94, and C69–C102. Residue Q34 participates in a 1-acyl-sn-glycero-3-phosphocholine binding. E36 contributes to the Zn(2+) binding site. N38 contributes to the a 1-acyl-sn-glycero-3-phosphocholine binding site. H62 contacts Zn(2+).

The protein belongs to the A9/FIL1 family. Self-interacts and binds to AZI1. Does not interact with PDLP1. The cofactor is Zn(2+).

It is found in the secreted. The protein localises to the extracellular space. Its subcellular location is the apoplast. It localises to the endoplasmic reticulum. The protein resides in the cell junction. It is found in the plasmodesma. Functionally, putative lipid transfer protein required for systemic acquired resistance (SAR) long distance signaling. May interact with a lipid-derived molecule to promote long distance signaling associated with SAR. Together with AZI1, required for glycerol-3-phosphate- (G3P) and azelaic acid- (AA) induced systemic acquired resistance (SAR). Component of plant systemic immunity involved in priming defenses in a AA-dependent manner, by modulating production and/or translocation of a mobile signal(s) during SAR. Is able to bind with high affinity monoacylated phospholipids, mainly lysophosphatidylcholines. The chain is Putative lipid-transfer protein DIR1 (DIR1) from Arabidopsis thaliana (Mouse-ear cress).